The sequence spans 992 residues: GATOR2 complex protein WDR59 (992 aa).

WD repeat units follow at residues 57-98 (QSKW…GEVG), 103-143 (GHTR…KPTV), 146-185 (SAVAGASQVKWNKKNANYLATSHDGDVRIWDKRKPSTAVE), 189-229 (AHLS…KYLN), 232-276 (PCQV…APVH), 278-318 (FVGH…RVDY), and 319-362 (QMQR…SLSH). Residues 343-373 (PEPEKTPHPQDIDHQPSLSHGEEDAIKEDPP) form a disordered region. Residues 344-373 (EPEKTPHPQDIDHQPSLSHGEEDAIKEDPP) show a composition bias toward basic and acidic residues. The RWD domain occupies 393 to 494 (QEFSLINVQI…RQLVSCLESF (102 aa)). At Ser564 the chain carries Phosphoserine. Residues 660-706 (KSLGELYILNVNDTQETCQKNATSAMLVGRKDLVQVWSLATVATDLC) form a WD 8 repeat. Phosphoserine occurs at positions 839, 840, and 848. A disordered region spans residues 849 to 870 (LTYSDPRERERDQHDKNKRLLD). Residues 853-869 (DPRERERDQHDKNKRLL) show a composition bias toward basic and acidic residues. A C4-type zinc finger spans residues 919–939 (YCSHCRSEVRGTQCAICKGFT). 13 residues coordinate Zn(2+): Cys920, Cys923, Cys932, Cys935, Cys945, Cys956, His961, His964, His967, Cys978, Cys982, Cys984, and Cys986. An RING-type; atypical zinc finger spans residues 940–989 (FQCAICHVAVRGSSNFCLTCGHGGHTSHMMEWFRTQEVCPTGCGCHCLLE).

This sequence belongs to the WD repeat WDR59 family. In terms of assembly, component of the GATOR2 subcomplex, composed of MIOS, SEC13, SEH1L, WDR24 and WDR59. The GATOR2 complex interacts with CASTOR1 and CASTOR2; the interaction is negatively regulated by arginine. The GATOR2 complex interacts with SESN1, SESN2 and SESN3; the interaction is negatively regulated by amino acids. Interacts with DDB1-CUL4A/B E3 ligase complexes.

The protein localises to the lysosome membrane. The GATOR2 complex is negatively regulated by the upstream amino acid sensors CASTOR1 and SESN2, which sequester the GATOR2 complex in absence of amino acids. In the presence of abundant amino acids, GATOR2 is released from CASTOR1 and SESN2 and activated. In terms of biological role, as a component of the GATOR2 complex, functions as an activator of the amino acid-sensing branch of the mTORC1 signaling pathway. The GATOR2 complex indirectly activates mTORC1 through the inhibition of the GATOR1 subcomplex. GATOR2 probably acts as an E3 ubiquitin-protein ligase toward GATOR1. In the presence of abundant amino acids, the GATOR2 complex mediates ubiquitination of the NPRL2 core component of the GATOR1 complex, leading to GATOR1 inactivation. In the absence of amino acids, GATOR2 is inhibited, activating the GATOR1 complex. This Mus musculus (Mouse) protein is GATOR2 complex protein WDR59.